A 1037-amino-acid chain; its full sequence is Presequence protease, mitochondrial (1037 aa).

Residues 1–15 (MWRCGGRQGLGVLRR) constitute a mitochondrion transit peptide. His104 is a binding site for Zn(2+). The active-site Proton acceptor is Glu107. Zn(2+) is bound by residues His108 and Glu205. Cys119 and Cys556 form a disulfide bridge. N6-acetyllysine is present on Lys759. N6-acetyllysine; alternate is present on Lys770. N6-succinyllysine; alternate is present on Lys770. The disordered stretch occupies residues 803–834 (IGRSKKERRPVRPHTVEKPVPSSSGGDAHVPH). The span at 804 to 814 (GRSKKERRPVR) shows a compositional bias: basic residues. The residue at position 849 (Lys849) is an N6-succinyllysine. Lys884 bears the N6-acetyllysine mark. Position 946 is an N6-succinyllysine (Lys946).

It belongs to the peptidase M16 family. PreP subfamily. As to quaternary structure, monomer and homodimer; homodimerization is induced by binding of the substrate. Requires Zn(2+) as cofactor. In terms of processing, a disulfide bond locks the enzyme in the closed conformation preventing substrate entry into the catalytic chamber.

The protein resides in the mitochondrion matrix. With respect to regulation, mainly exists in a closed and catalytically competent conformation but a closed-to-open switch allows substrate entry into the catalytic chamber. Substrate binding induces closure and dimerization. A disulfide bond may lock the enzyme in a closed conformation preventing substrate entry into the catalytic chamber, participating in redox regulation of the enzyme. Inhibited by metal-chelating agents. Inhibited by nickel and zinc excess, and slightly activated by manganese. Its function is as follows. Metalloendopeptidase of the mitochondrial matrix that functions in peptide cleavage and degradation rather than in protein processing. Has an ATP-independent activity. Specifically cleaves peptides in the range of 5 to 65 residues. Shows a preference for cleavage after small polar residues and before basic residues, but without any positional preference. Degrades the transit peptides of mitochondrial proteins after their cleavage. Also degrades other unstructured peptides. It is also able to degrade amyloid-beta protein 40, one of the peptides produced by APP processing, when it accumulates in mitochondrion. It is a highly efficient protease, at least toward amyloid-beta protein 40. Cleaves that peptide at a specific position and is probably not processive, releasing digested peptides intermediates that can be further cleaved subsequently. It is also able to degrade amyloid-beta protein 42. This Pongo abelii (Sumatran orangutan) protein is Presequence protease, mitochondrial.